The sequence spans 142 residues: uncharacterized protein (142 aa).

One can recognise an N-acetyltransferase domain in the interval 1–120 (MADKFDANDE…TILKWEKNMD (120 aa)).

It belongs to the acetyltransferase family.

This is an uncharacterized protein from Streptococcus pyogenes serotype M3 (strain ATCC BAA-595 / MGAS315).